Consider the following 826-residue polypeptide: Golgin subfamily A member 6-like protein 25 (826 aa).

Disordered stretches follow at residues 1-100, 297-327, 345-425, 502-534, 547-646, and 658-826; these read MWPQ…HQEA, QEQEEKIREQEEKMRRQEEMMWEKEEKMRRQ, MHEQ…EMWR, QEEMWREEEKMHEQEKIWEEEKRQEQEDKMWRQ, RQEE…EQEE, and QEEM…MQEH. Basic and acidic residues predominate over residues 31-52; sequence MSKETRQSKLAEAKEQLTDHHP. Polar residues-rich tracts occupy residues 53–63 and 71–83; these read QTNPSVGTAAS and NNGTNPETTTSGG. Residues 86–100 are compositionally biased toward basic and acidic residues; that stretch reads SPEDEQKASHQHQEA. Residues 157-822 are a coiled coil; sequence LEQALSAVAT…EVRLRQQEEK (666 aa). 2 stretches are compositionally biased toward basic and acidic residues: residues 658 to 678 and 686 to 826; these read QEEMMQEQEEKMGEQEEKMWE and QEEK…MQEH.

The protein belongs to the GOLGA6 family.

The polypeptide is Golgin subfamily A member 6-like protein 25 (Homo sapiens (Human)).